The chain runs to 388 residues: Succinate--CoA ligase [ADP-forming] subunit beta (388 aa).

Residues 9–244 enclose the ATP-grasp domain; sequence KQLFAEYGLP…PSQEDEREAH (236 aa). Residues Lys46, 53 to 55, Glu99, Thr102, and Glu107 contribute to the ATP site; that span reads GRG. The Mg(2+) site is built by Asn199 and Asp213. Residues Asn264 and 321–323 each bind substrate; that span reads GIV.

Belongs to the succinate/malate CoA ligase beta subunit family. Heterotetramer of two alpha and two beta subunits. It depends on Mg(2+) as a cofactor.

The catalysed reaction is succinate + ATP + CoA = succinyl-CoA + ADP + phosphate. The enzyme catalyses GTP + succinate + CoA = succinyl-CoA + GDP + phosphate. Its pathway is carbohydrate metabolism; tricarboxylic acid cycle; succinate from succinyl-CoA (ligase route): step 1/1. Its function is as follows. Succinyl-CoA synthetase functions in the citric acid cycle (TCA), coupling the hydrolysis of succinyl-CoA to the synthesis of either ATP or GTP and thus represents the only step of substrate-level phosphorylation in the TCA. The beta subunit provides nucleotide specificity of the enzyme and binds the substrate succinate, while the binding sites for coenzyme A and phosphate are found in the alpha subunit. The sequence is that of Succinate--CoA ligase [ADP-forming] subunit beta from Colwellia psychrerythraea (strain 34H / ATCC BAA-681) (Vibrio psychroerythus).